Consider the following 51-residue polypeptide: Large ribosomal subunit protein eL40 (51 aa).

It belongs to the eukaryotic ribosomal protein eL40 family.

In Thermococcus gammatolerans (strain DSM 15229 / JCM 11827 / EJ3), this protein is Large ribosomal subunit protein eL40.